The following is a 337-amino-acid chain: Heme A synthase (337 aa).

5 helical membrane-spanning segments follow: residues 6–26 (ITKW…IGGI), 87–107 (FIHR…LIYF), 119–139 (LPYI…WYMV), 154–174 (LAFH…QLIK), and 192–212 (LIFS…GALV). H256 contributes to the heme binding site. 3 helical membrane passes run 258–278 (LVGY…LKIE), 285–305 (IAYF…ITLL), and 308–328 (VPII…SIII). H316 provides a ligand contact to heme.

This sequence belongs to the COX15/CtaA family. Type 2 subfamily. As to quaternary structure, interacts with CtaB. The cofactor is heme b.

It localises to the cell membrane. It catalyses the reaction Fe(II)-heme o + 2 A + H2O = Fe(II)-heme a + 2 AH2. It participates in porphyrin-containing compound metabolism; heme A biosynthesis; heme A from heme O: step 1/1. Catalyzes the conversion of heme O to heme A by two successive hydroxylations of the methyl group at C8. The first hydroxylation forms heme I, the second hydroxylation results in an unstable dihydroxymethyl group, which spontaneously dehydrates, resulting in the formyl group of heme A. In Rickettsia africae (strain ESF-5), this protein is Heme A synthase.